The following is a 275-amino-acid chain: NH(3)-dependent NAD(+) synthetase (275 aa).

46–53 (GISGGQDS) serves as a coordination point for ATP. Asp-52 is a Mg(2+) binding site. Arg-140 is a deamido-NAD(+) binding site. ATP is bound at residue Thr-160. Glu-165 serves as a coordination point for Mg(2+). Residues Lys-173 and Asp-180 each contribute to the deamido-NAD(+) site. Residues Lys-189 and Thr-211 each contribute to the ATP site. Residue 260–261 (HK) participates in deamido-NAD(+) binding.

Belongs to the NAD synthetase family. As to quaternary structure, homodimer.

The enzyme catalyses deamido-NAD(+) + NH4(+) + ATP = AMP + diphosphate + NAD(+) + H(+). It functions in the pathway cofactor biosynthesis; NAD(+) biosynthesis; NAD(+) from deamido-NAD(+) (ammonia route): step 1/1. Functionally, catalyzes the ATP-dependent amidation of deamido-NAD to form NAD. Uses ammonia as a nitrogen source. This Salmonella enteritidis PT4 (strain P125109) protein is NH(3)-dependent NAD(+) synthetase.